Consider the following 391-residue polypeptide: MLATKTKPMIVSMGPHHPSMHGVLRLIVTLDGENVIDCEPILGYLHRGMEKIAENRTIVQYLPYVTRWDYLATMFTEAITVNAPEKLTNIQVPKRASYIRMIMLELSRVASHLLWLGPFMADIGAQTPFFYILREREMIYDLFEAATGMRMMHNYFRIGGVAVDLPYGWIDKCLDFCDYFLPKVNEYERLITNNPIFLKRVEGIGIIGKEEAINWGLSGPMLRASGVQWDLRKVDHYECYDELDWQIQWQKEGDSLARYLVRIGEMKESIKIIQQALKSIPGGPYENLEARRLQRGKKSEWNNFEYQFISKKPSPTFKLPKQEHYIRVEAPKGELGVFLIGDDSVFPWRWKIRPPGFINLQILPQLVKGMKLADIMTILGSIDIIMGEVDR.

It belongs to the complex I 49 kDa subunit family. As to quaternary structure, NDH is composed of at least 16 different subunits, 5 of which are encoded in the nucleus.

It localises to the plastid. The protein resides in the chloroplast thylakoid membrane. The enzyme catalyses a plastoquinone + NADH + (n+1) H(+)(in) = a plastoquinol + NAD(+) + n H(+)(out). It carries out the reaction a plastoquinone + NADPH + (n+1) H(+)(in) = a plastoquinol + NADP(+) + n H(+)(out). NDH shuttles electrons from NAD(P)H:plastoquinone, via FMN and iron-sulfur (Fe-S) centers, to quinones in the photosynthetic chain and possibly in a chloroplast respiratory chain. The immediate electron acceptor for the enzyme in this species is believed to be plastoquinone. Couples the redox reaction to proton translocation, and thus conserves the redox energy in a proton gradient. This chain is NAD(P)H-quinone oxidoreductase subunit H, chloroplastic, found in Physcomitrium patens (Spreading-leaved earth moss).